A 1725-amino-acid polypeptide reads, in one-letter code: Latrophilin Cirl (1725 aa).

The Extracellular portion of the chain corresponds to 1-757 (MALNELGNCA…LFTMFDGNMR (757 aa)). An SUEL-type lectin domain is found at 18-107 (ACEGKQLTIE…KYLEAHYQCI (90 aa)). N-linked (GlcNAc...) asparagine glycosylation is present at Asn-135. Residues 164–284 (AVQPTHSTPS…SAANNSVNIG (121 aa)) are disordered. 2 stretches are compositionally biased toward low complexity: residues 167–176 (PTHSTPSSST) and 224–236 (SSSS…SAGN). 7 N-linked (GlcNAc...) asparagine glycosylation sites follow: Asn-236, Asn-278, Asn-326, Asn-388, Asn-645, Asn-693, and Asn-720. Residues 259 to 282 (LLTTKSSPNRTPGTTASAANNSVN) are compositionally biased toward polar residues. The disordered stretch occupies residues 361–390 (DDEYDDDLPAASSTTPQPSNNGGDCVHNSS). Over residues 371–390 (ASSTTPQPSNNGGDCVHNSS) the composition is skewed to polar residues. The region spanning 551–744 (RNVVQKVKNI…AILMDVVDEH (194 aa)) is the GAIN-B domain. Intrachain disulfides connect Cys-699-Cys-726 and Cys-714-Cys-728. Residues 699–744 (CVFWNYIDHAWSANGCSLESTNRTHSVCSCNHLTNFAILMDVVDEH) are GPS. The helical transmembrane segment at 758–778 (IFIYISVAICVVFIIIALLTL) threads the bilayer. The Cytoplasmic portion of the chain corresponds to 779-791 (KLFNGVFVKSART). The helical transmembrane segment at 792 to 812 (SIYSSIYICLLAIELLFLLGI) threads the bilayer. Residues 813–818 (EQTETS) are Extracellular-facing. A helical membrane pass occupies residues 819–839 (IFCGFITVFLHCAILSGTAWF). Over 840–865 (CYEAFHSYSTLTSDELLLEVDQTPKV) the chain is Cytoplasmic. Residues 866–886 (NCYYLLSYGLSLSVVAISLVI) form a helical membrane-spanning segment. Over 887 to 910 (DPSTYTQNDYCVLMEANALFYSTF) the chain is Extracellular. A helical transmembrane segment spans residues 911 to 931 (VAPVLIFFVAAITYTFLSWII). The Cytoplasmic segment spans residues 932–958 (MRRKSRTALKTKEHTRLANVRFDIRCS). A helical membrane pass occupies residues 959-979 (FVFLLLLSVVWCCAYFYLRGA). Residues 980-986 (KLDEDGA) are Extracellular-facing. A helical transmembrane segment spans residues 987 to 1007 (PIYGYCFICFNTLLGIYIFVF). The Cytoplasmic segment spans residues 1008-1725 (HCIQNEKIRR…VRCYLEPLAK (718 aa)). A disordered region spans residues 1056-1088 (TANQSAGTLSKSKSKLPLGAGDEARDGDAQQQQ). Position 1153 is a phosphoserine (Ser-1153). 4 disordered regions span residues 1236–1263 (HNNQ…LHSR), 1309–1337 (QQLQ…AEQH), 1472–1555 (GGGS…SDER), and 1636–1705 (LFGH…QARH). Positions 1237–1246 (NNQHGKKKRG) are enriched in basic residues. 2 positions are modified to phosphoserine: Ser-1255 and Ser-1262. Over residues 1309 to 1327 (QQLQQQQLRQQRQQQQQQL) the composition is skewed to low complexity. 2 positions are modified to phosphoserine: Ser-1328 and Ser-1329. Residues 1478–1496 (GGSVTSRSQQQQQQQLKQK) are compositionally biased toward low complexity. Composition is skewed to acidic residues over residues 1505 to 1522 (DDDD…DEVT) and 1532 to 1543 (CDDEDNESDIDD). Residues 1651–1666 (QTPAQKRQQLQKLSPQ) are compositionally biased toward polar residues. A compositionally biased stretch (low complexity) spans 1667–1683 (STTSSSSHTSHSNPQHA). Residues 1684–1693 (PAHHLQHHHT) are compositionally biased toward basic residues. A compositionally biased stretch (low complexity) spans 1694–1705 (QQQQQQQQQARH).

It belongs to the G-protein coupled receptor 2 family. LN-TM7 subfamily. As to quaternary structure, forms a heterodimer, consisting of a large extracellular region non-covalently linked to a seven-transmembrane moiety. Proteolytically cleaved into 2 subunits, an extracellular subunit and a seven-transmembrane subunit.

Its subcellular location is the cell membrane. This Drosophila mojavensis (Fruit fly) protein is Latrophilin Cirl.